Reading from the N-terminus, the 309-residue chain is ATP synthase gamma chain (309 aa).

It belongs to the ATPase gamma chain family. As to quaternary structure, F-type ATPases have 2 components, CF(1) - the catalytic core - and CF(0) - the membrane proton channel. CF(1) has five subunits: alpha(3), beta(3), gamma(1), delta(1), epsilon(1). CF(0) has three main subunits: a, b and c.

The protein resides in the cell membrane. Functionally, produces ATP from ADP in the presence of a proton gradient across the membrane. The gamma chain is believed to be important in regulating ATPase activity and the flow of protons through the CF(0) complex. This Mycobacterium sp. (strain JLS) protein is ATP synthase gamma chain.